The chain runs to 1012 residues: Vacuolar membrane protease (1012 aa).

At 1 to 60 (MRRSTDPRNLLVRRGPLLVDGESAISELDPGFFPTGDAPKMSSTTRRRFNLIAFTPGPVT) the chain is on the cytoplasmic side. A helical membrane pass occupies residues 61–81 (VISSLVYLALLIPLLLVHTIV). Residues 82 to 432 (PSAPKSNPKG…SFAVFRLHTL (351 aa)) lie on the Vacuolar side of the membrane. Asn-159 carries an N-linked (GlcNAc...) asparagine glycan. Residues His-215 and Asp-227 each contribute to the Zn(2+) site. The Proton acceptor role is filled by Glu-261. Zn(2+) contacts are provided by Glu-262, Glu-287, and His-360. A helical membrane pass occupies residues 433–453 (FAISVTLLVVCPIVLFVIGII). Over 454–487 (LSKMDKMYLFSIHETIPETKEKVSVRGLRGLFRY) the chain is Cytoplasmic. Residues 488-508 (PIILVVSSGILIGLSYLLAKV) traverse the membrane as a helical segment. At 509–518 (NPFIVHSSSY) the chain is on the vacuolar side. Residues 519 to 539 (AVWSMMLSSWIFMTWFLSCIA) traverse the membrane as a helical segment. Residues 540-550 (DFFRPSALHRA) lie on the Cytoplasmic side of the membrane. A helical membrane pass occupies residues 551 to 571 (YTFTWQLLVMWVLLVISTVYV). Residues 572–575 (NQHD) lie on the Vacuolar side of the membrane. A helical transmembrane segment spans residues 576-596 (IAAGYFIVFYFAGTFLATLIS). At 597 to 710 (YLELFALPNK…WSASLPTWTW (114 aa)) the chain is on the cytoplasmic side. Residues 614 to 629 (SQYPSRLGSNRSSRIL) are compositionally biased toward polar residues. A disordered region spans residues 614–660 (SQYPSRLGSNRSSRILSPSADELPTGGDNNGEIYDGEEEPTESSSLL). A helical membrane pass occupies residues 711–731 (VLQFLFVGPVVIMFIGQLGLF). The Vacuolar portion of the chain corresponds to 732–743 (LTSAMNQVGADG). Residues 744-764 (VGLLVVYIAIAVFSVLLLIPL) form a helical membrane-spanning segment. Over 765 to 777 (SPFIHRFTYHVPT) the chain is Cytoplasmic. A helical membrane pass occupies residues 778–798 (FLLLVFIATLIYNLAAFPFSA). The Vacuolar segment spans residues 799–1012 (ENRLKIFFVQ…DGLVEVSRGF (214 aa)). N-linked (GlcNAc...) asparagine glycosylation is found at Asn-842 and Asn-878.

It belongs to the peptidase M28 family. Requires Zn(2+) as cofactor.

Its subcellular location is the vacuole membrane. Functionally, may be involved in vacuolar sorting and osmoregulation. The protein is Vacuolar membrane protease of Coccidioides posadasii (strain RMSCC 757 / Silveira) (Valley fever fungus).